The primary structure comprises 370 residues: 3-isopropylmalate dehydrogenase (370 aa).

Residue 77-90 (GPKWDSVPYEVRPE) participates in NAD(+) binding. Substrate is bound by residues Arg97, Arg107, Arg135, and Asp226. Positions 226, 250, and 254 each coordinate Mg(2+). NAD(+) is bound at residue 290-302 (GSAPDIAGKGIAN).

This sequence belongs to the isocitrate and isopropylmalate dehydrogenases family. LeuB type 1 subfamily. In terms of assembly, homodimer. Mg(2+) is required as a cofactor. Requires Mn(2+) as cofactor.

The protein resides in the cytoplasm. It carries out the reaction (2R,3S)-3-isopropylmalate + NAD(+) = 4-methyl-2-oxopentanoate + CO2 + NADH. The protein operates within amino-acid biosynthesis; L-leucine biosynthesis; L-leucine from 3-methyl-2-oxobutanoate: step 3/4. Its function is as follows. Catalyzes the oxidation of 3-carboxy-2-hydroxy-4-methylpentanoate (3-isopropylmalate) to 3-carboxy-4-methyl-2-oxopentanoate. The product decarboxylates to 4-methyl-2 oxopentanoate. The sequence is that of 3-isopropylmalate dehydrogenase from Brucella melitensis biotype 1 (strain ATCC 23456 / CCUG 17765 / NCTC 10094 / 16M).